The following is a 443-amino-acid chain: Xaa-Pro dipeptidase (443 aa).

5 residues coordinate Mn(2+): Asp246, Asp257, His339, Glu384, and Glu423.

This sequence belongs to the peptidase M24B family. Bacterial-type prolidase subfamily. Mn(2+) serves as cofactor.

It catalyses the reaction Xaa-L-Pro dipeptide + H2O = an L-alpha-amino acid + L-proline. Its function is as follows. Splits dipeptides with a prolyl residue in the C-terminal position. This is Xaa-Pro dipeptidase from Yersinia pseudotuberculosis serotype I (strain IP32953).